Here is a 164-residue protein sequence, read N- to C-terminus: Osteocalcin 2b (164 aa).

The first 18 residues, 1–18, serve as a signal peptide directing secretion; that stretch reads MKSLTLLTICAVLSVSLS. Positions 19–115 are excised as a propeptide; that stretch reads MNDLALDVVL…LASVLLRRKR (97 aa). A compositionally biased stretch (low complexity) spans 30-95; that stretch reads PDPAAEPAPA…EAMAEDPAAA (66 aa). The tract at residues 30–99 is disordered; that stretch reads PDPAAEPAPA…EDPAAATEPE (70 aa). Residues 128–160 enclose the Gla domain; sequence QVESLSEVCELNLACEHMAETAGIVAAYTAYYG. 3 residues coordinate Ca(2+): Glu130, Glu134, and Glu137. 4-carboxyglutamate is present on residues Glu130, Glu134, and Glu137. Cys136 and Cys142 are oxidised to a cystine.

It belongs to the osteocalcin/matrix Gla protein family. In terms of processing, gamma-carboxyglutamate residues are formed by vitamin K dependent carboxylation. These residues are essential for the binding of calcium.

The protein localises to the secreted. Functionally, binds strongly to apatite and calcium. The polypeptide is Osteocalcin 2b (Oncorhynchus mykiss (Rainbow trout)).